The chain runs to 895 residues: Androgen receptor (895 aa).

A modulating region spans residues M1 to K533. The interval M1–A562 is interaction with ZNF318. Disordered stretches follow at residues V33–P155 and Q175–G211. 2 stretches are compositionally biased toward low complexity: residues A44–Q81 and Q175–A200. Phosphoserine; by CDK9 is present on S66. Phosphoserine is present on S79. The segment covering P201–G211 has biased composition (polar residues). At Y208 the chain carries Phosphotyrosine; by CSK. The residue at position 241 (S241) is a Phosphoserine. At Y252 the chain carries Phosphotyrosine; by CSK and TNK2. Residues Y292, Y331, Y342, and Y347 each carry the phosphotyrosine; by CSK modification. The residue at position 348 (Y348) is a Phosphotyrosine; by CSK and TNK2. A Glycyl lysine isopeptide (Lys-Gly) (interchain with G-Cter in SUMO) cross-link involves residue K371. Y378 bears the Phosphotyrosine; by CSK mark. A Glycyl lysine isopeptide (Lys-Gly) (interchain with G-Cter in SUMO) cross-link involves residue K496. A phosphotyrosine; by CSK mark is found at Y510 and Y527. The tract at residues Y527–T894 is interaction with LPXN. The nuclear receptor DNA-binding region spans T534 to L607. NR C4-type zinc fingers lie at residues C535–C555 and C571–C595. Residues Y547–V637 form an interaction with HIPK3 region. An interaction with CCAR1 region spans residues Q567–T894. The tract at residues M600–T894 is interaction with KAT7. S626 is subject to Phosphoserine; by STK4/MST1. The 232-residue stretch at E644–I875 folds into the NR LBD domain. 17beta-hydroxy-5alpha-androstan-3-one contacts are provided by N681 and R728. Residues K821 and K823 each participate in a glycyl lysine isopeptide (Lys-Gly) (interchain with G-Cter in ubiquitin) cross-link. T853 is a 17beta-hydroxy-5alpha-androstan-3-one binding site. A Phosphotyrosine; by CSK modification is found at Y891.

Belongs to the nuclear hormone receptor family. NR3 subfamily. As to quaternary structure, binds DNA as a homodimer. Part of a ternary complex containing AR, EFCAB6/DJBP and PARK7. Interacts with HIPK3 and NR0B2 in the presence of androgen. The ligand binding domain interacts with KAT7/HBO1 in the presence of dihydrotestosterone. Interacts with EFCAB6/DJBP, PQBP1, RANBP9, RBAK, SPDEF, SRA1, TGFB1I1 and RREB1. Interacts with ZMIZ1/ZIMP10 and ZMIZ2/ZMIP7 which both enhance its transactivation activity. Interacts with SLC30A9 and RAD54L2/ARIP4. Interacts with MACROD1 (via macro domain). Interacts via the ligand-binding domain with LXXLL and FXXLF motifs from NCOA1, NCOA2, NCOA3 and MAGEA11. Interacts (via nuclear receptor DNA binding domain and nuclear receptor ligand binding domain) with NCOA4. The AR N-terminal poly-Gln region binds Ran resulting in enhancement of AR-mediated transactivation. Ran-binding decreases as the poly-Gln length increases. Interacts with HIP1 (via coiled coil domain). Interacts (via ligand-binding domain) with TRIM68. Interacts with TNK2. Interacts with USP26. Interacts with RNF6. Interacts (regulated by RNF6 probably through polyubiquitination) with RNF14; regulates AR transcriptional activity. Interacts with PRMT2 and TRIM24. Interacts with RACK1. Interacts with RANBP10; this interaction enhances dihydrotestosterone-induced AR transcriptional activity. Interacts with PRPF6 in a hormone-independent way; this interaction enhances dihydrotestosterone-induced AR transcriptional activity. Interacts with STK4/MST1. Interacts with ZIPK/DAPK3. Interacts with LPXN. Interacts with MAK. Part of a complex containing AR, MAK and NCOA3. Interacts with CRY1. Interacts with CCAR1 and GATA2. Interacts with ZNF318. Interacts with BUD31. Interacts with ARID4A. Interacts with ARID4B. Interacts (via NR LBD domain) with ZBTB7A; the interaction is direct and androgen-dependent. Interacts with NCOR1. Interacts with NCOR2. Interacts with CRY2 in a ligand-dependent manner. Phosphorylated in prostate cancer cells in response to several growth factors including EGF. Phosphorylation is induced by c-Src kinase (CSK). Tyr-510 is one of the major phosphorylation sites and an increase in phosphorylation and Src kinase activity is associated with prostate cancer progression. Phosphorylation by TNK2 enhances the DNA-binding and transcriptional activity. Phosphorylation at Ser-66 by CDK9 regulates AR promoter selectivity and cell growth. Post-translationally, sumoylated on Lys-371 (major) and Lys-496. Ubiquitinated. Deubiquitinated by USP26. 'Lys-6' and 'Lys-27'-linked polyubiquitination by RNF6 modulates AR transcriptional activity and specificity. In terms of processing, palmitoylated by ZDHHC7 and ZDHHC21. Palmitoylation is required for plasma membrane targeting and for rapid intracellular signaling via ERK and AKT kinases and cAMP generation.

The protein resides in the nucleus. It localises to the cytoplasm. Its function is as follows. Steroid hormone receptors are ligand-activated transcription factors that regulate eukaryotic gene expression and affect cellular proliferation and differentiation in target tissues. Transcription factor activity is modulated by bound coactivator and corepressor proteins like ZBTB7A that recruits NCOR1 and NCOR2 to the androgen response elements/ARE on target genes, negatively regulating androgen receptor signaling and androgen-induced cell proliferation. Transcription activation is also down-regulated by NR0B2. Activated, but not phosphorylated, by HIPK3 and ZIPK/DAPK3. The sequence is that of Androgen receptor (AR) from Papio hamadryas (Hamadryas baboon).